A 1438-amino-acid chain; its full sequence is MNELTKFTNQLAKPETFDQIQIGIASPERIRSWSFGEIKKPETINYRTFKPERDGLFCARIFGPVKDYECLCGKYKRMKYKGVVCEKCGVEVTVTKVRRERMGHIELAAPVAHIWFLKSLPSRIGLLLDMQLKQLERVLYFEHYIVTEPGLTPLEKFQLLTEDELLEAQDEYGEDAFSAGIGAEAVKFMLMDLDLEQEKEDLLEELATTKSKLKPAKIIKRLKVVESFIESGNRPEWMILEVVPVIPPELRPLVPLDGGRFATSDLNDLYRRVINRNNRLKRLIELRAPDIIVRNEKRMLQESVDALFDNGRRGRVITGANKRPLKSLSDMLKGKQGRFRQNLLGKRVDYSGRSVIVTGPELKLHQCGLPKKMALELFKPFIYARLDAKGLSMTLKQAKKWVEKERKEVWDILDEVIREHPVLLNRAPTLHRLGIQAFEPVLIEGKAIQLHPLVCSAFNADFDGDQMAVHVPLSLEAQLEARVLMMSTNNILSPANGKPIIVPSQDMVLGLYYLSMERQEKTPEYIEEKDGTKIEKLPRFADMAEVHQALETKSVTLHTRIIARVPQADEDGKPEMKRFVTTPGRMLIGECLPKNHKVPYDIVNRLLTKKEIGDVIDQVYRHTGQKDTVLFADAIMVLGFRHAFKAGISFGKDDMIIPDSKEGMIEDTKKQVADYEQQYQDGLITQQEKYNKVIDAWSRCGDQVAEAMMDEIKSQKFDKDGKESEINSIYMMSHSGARGSPAQMKQLAGMRGLMAKPSGEIIENPIISNFKEGLTVLEYFNSTHGARKGLADTALKTANSGYLTRRLVDVSQDCVIVEEDCKTDNALEMRAIVQGGSVIASLGERILGRTLVDDLVNAKTDEVIVKAGTLLDEPMVKAIEEAEVQVARIRSPLVCEADQGVCATCYGRDLARGTPVNIGEAVGVIAAQSIGEPGTQLTMRTFHIGGAAQLNETSHLESISDGKVEYRDMPTITDKKGRILSLARNGELAVIDAEGREREIHKVPYGTVLMHKDGAKVKEGDRLAEWDPFSLPIITEQSGVVKYQDLIEGTTLEEQTDDATGIAQRVVTENRATGRKKKEDLRPRLTLLSEGQSEDETEAQRYLLAPGTTLSVTDGQTVEAGDILARASREAAKTRDITGGLPRVAELFEARVPKDNAVIAKISGKIEFVREYKAKRKIAIVPEEGEAVDYLIPKTKVIDVQEGDFVKKGDTLISGSPNPHDILDVLGVEALAEYLCTEIQEVYRLQGVKINDKHIEVIVRQMLQKVEITDGGDTVLLPGEQVDRDEMDEANAKLGRGKKPATGNPVLLGITKASLQTRSFISAASFQETTRVLTQASVEGKKDTLIGLKENVIVGRLIPAGTGAGMNRMRVTASARDAALRAQWKKQQEKLAAADEAAMAAEKEPEAEVMDADAMAAAMGGDSAGGDTKPEAPEASEE.

Zn(2+) is bound by residues Cys-70, Cys-72, Cys-85, and Cys-88. Mg(2+)-binding residues include Asp-461, Asp-463, and Asp-465. Residues Cys-821, Cys-895, Cys-902, and Cys-905 each coordinate Zn(2+). Low complexity predominate over residues 1413 to 1427 (DAMAAAMGGDSAGGD). The interval 1413 to 1438 (DAMAAAMGGDSAGGDTKPEAPEASEE) is disordered.

The protein belongs to the RNA polymerase beta' chain family. As to quaternary structure, the RNAP catalytic core consists of 2 alpha, 1 beta, 1 beta' and 1 omega subunit. When a sigma factor is associated with the core the holoenzyme is formed, which can initiate transcription. Requires Mg(2+) as cofactor. The cofactor is Zn(2+).

The catalysed reaction is RNA(n) + a ribonucleoside 5'-triphosphate = RNA(n+1) + diphosphate. In terms of biological role, DNA-dependent RNA polymerase catalyzes the transcription of DNA into RNA using the four ribonucleoside triphosphates as substrates. The sequence is that of DNA-directed RNA polymerase subunit beta' from Erythrobacter litoralis (strain HTCC2594).